The primary structure comprises 433 residues: Putative purine permease YbbY (433 aa).

The Periplasmic portion of the chain corresponds to 1 to 17 (MFNFAVSRESLLSGFQW). A helical transmembrane segment spans residues 18–38 (FFFIFCNTVVVPPTLLSAFQL). The Cytoplasmic segment spans residues 39–42 (PQSS). A helical transmembrane segment spans residues 43–63 (LLTLTQYAFLATALACFAQAF). Residues 64–68 (CGHRR) lie on the Periplasmic side of the membrane. The chain crosses the membrane as a helical span at residues 69–89 (AIMEGPGGLWWGTILTITLGE). Topologically, residues 90-102 (ASRGTPINDIATS) are cytoplasmic. Residues 103–123 (LAVGIALSGVLTMLIGFSGLG) form a helical membrane-spanning segment. Over 124–130 (HRLARLF) the chain is Periplasmic. A helical membrane pass occupies residues 131–151 (TPSVMVLFMLMLGAQLTTIFF). Topologically, residues 152–169 (KGMLGLPFGIADPNFKIQ) are cytoplasmic. A helical transmembrane segment spans residues 170–190 (LPPFALSVAVMCLVLAMIIFL). The Periplasmic portion of the chain corresponds to 191-196 (PQRFAR). The chain crosses the membrane as a helical span at residues 197–217 (YGLLVGTITGWLLWYFCFPSS). At 218–230 (HSLSGELHWQWFP) the chain is on the cytoplasmic side. A helical transmembrane segment spans residues 231-251 (LGSGGALSPGIILTAVITGLV). The Periplasmic segment spans residues 252-288 (NISNTYGAIRGTDVFYPQQGAGNTRYRRSFVATGFMT). A helical transmembrane segment spans residues 289-309 (LITVPLAVIPFSPFVSSIGLL). Topologically, residues 310-319 (TQTGDYTRRS) are cytoplasmic. The helical transmembrane segment at 320-340 (FIYGSVICLLVALVPALTRLF) threads the bilayer. The Periplasmic segment spans residues 341–345 (CSIPL). Residues 346–366 (PVSSAVMLVSYLPLLFSALVF) form a helical membrane-spanning segment. Residues 367–379 (SQQITFTARNIYR) are Cytoplasmic-facing. The helical transmembrane segment at 380–400 (LALPLFVGIFLMALPPVYLQD) threads the bilayer. Over 401–407 (LPLTLRP) the chain is Periplasmic. The helical transmembrane segment at 408-428 (LLSNGLLVGILLAVLMDNLIP) threads the bilayer. Residues 429–433 (WERIE) lie on the Cytoplasmic side of the membrane.

Belongs to the nucleobase:cation symporter-2 (NCS2) (TC 2.A.40) family.

The protein resides in the cell inner membrane. The polypeptide is Putative purine permease YbbY (ybbY) (Escherichia coli (strain K12)).